The chain runs to 101 residues: uncharacterized protein (101 aa).

The signal sequence occupies residues 1–25; sequence MISIPFRSTMSRTLVFIILPTVLSC.

This is an uncharacterized protein from Saccharomyces cerevisiae (strain ATCC 204508 / S288c) (Baker's yeast).